A 635-amino-acid polypeptide reads, in one-letter code: 4-hydroxy-3-methylbut-2-enyl diphosphate reductase (635 aa).

The 4-hydroxy-3-methylbut-2-enyl diphosphate reductase stretch occupies residues 1 to 279 (MSIILAKKSG…KEAIFKMSNK (279 aa)). Position 12 (Cys12) interacts with [4Fe-4S] cluster. Residues His42 and His77 each coordinate (2E)-4-hydroxy-3-methylbut-2-enyl diphosphate. Dimethylallyl diphosphate contacts are provided by His42 and His77. Isopentenyl diphosphate contacts are provided by His42 and His77. [4Fe-4S] cluster is bound at residue Cys99. His127 serves as a coordination point for (2E)-4-hydroxy-3-methylbut-2-enyl diphosphate. Position 127 (His127) interacts with dimethylallyl diphosphate. His127 is a binding site for isopentenyl diphosphate. Residue Glu129 is the Proton donor of the active site. Thr163 is a (2E)-4-hydroxy-3-methylbut-2-enyl diphosphate binding site. Cys191 is a binding site for [4Fe-4S] cluster. 4 residues coordinate (2E)-4-hydroxy-3-methylbut-2-enyl diphosphate: Ser219, Ser220, Asn221, and Ser263. Ser219, Ser220, Asn221, and Ser263 together coordinate dimethylallyl diphosphate. Isopentenyl diphosphate-binding residues include Ser219, Ser220, Asn221, and Ser263. 4 consecutive S1 motif domains span residues 298 to 373 (GQEV…LNRE), 380 to 455 (KEAF…ASRR), 476 to 544 (DTIK…LSIK), and 561 to 630 (GNIV…LSIK).

The protein in the N-terminal section; belongs to the IspH family. Requires [4Fe-4S] cluster as cofactor.

The catalysed reaction is isopentenyl diphosphate + 2 oxidized [2Fe-2S]-[ferredoxin] + H2O = (2E)-4-hydroxy-3-methylbut-2-enyl diphosphate + 2 reduced [2Fe-2S]-[ferredoxin] + 2 H(+). It carries out the reaction dimethylallyl diphosphate + 2 oxidized [2Fe-2S]-[ferredoxin] + H2O = (2E)-4-hydroxy-3-methylbut-2-enyl diphosphate + 2 reduced [2Fe-2S]-[ferredoxin] + 2 H(+). It participates in isoprenoid biosynthesis; dimethylallyl diphosphate biosynthesis; dimethylallyl diphosphate from (2E)-4-hydroxy-3-methylbutenyl diphosphate: step 1/1. Its pathway is isoprenoid biosynthesis; isopentenyl diphosphate biosynthesis via DXP pathway; isopentenyl diphosphate from 1-deoxy-D-xylulose 5-phosphate: step 6/6. Catalyzes the conversion of 1-hydroxy-2-methyl-2-(E)-butenyl 4-diphosphate (HMBPP) into a mixture of isopentenyl diphosphate (IPP) and dimethylallyl diphosphate (DMAPP). Acts in the terminal step of the DOXP/MEP pathway for isoprenoid precursor biosynthesis. The sequence is that of 4-hydroxy-3-methylbut-2-enyl diphosphate reductase from Clostridium tetani (strain Massachusetts / E88).